The chain runs to 86 residues: Large ribosomal subunit protein bL31B (86 aa).

This sequence belongs to the bacterial ribosomal protein bL31 family. Type B subfamily. As to quaternary structure, part of the 50S ribosomal subunit.

This Cupriavidus necator (strain ATCC 17699 / DSM 428 / KCTC 22496 / NCIMB 10442 / H16 / Stanier 337) (Ralstonia eutropha) protein is Large ribosomal subunit protein bL31B.